The following is a 215-amino-acid chain: Large ribosomal subunit protein uL4c (215 aa).

A disordered region spans residues 51-87 (QKQGTVSTKTRSEVRGGGKKPWRQKGTGRARAGSSRS). The segment covering 67–78 (GGKKPWRQKGTG) has biased composition (basic residues).

This sequence belongs to the universal ribosomal protein uL4 family. Part of the 50S ribosomal subunit.

It localises to the plastid. Its subcellular location is the chloroplast. Probably binds the 23S rRNA. This chain is Large ribosomal subunit protein uL4c (rpl4), found in Thalassiosira pseudonana (Marine diatom).